The chain runs to 141 residues: Nucleoside triphosphatase NudI (141 aa).

One can recognise a Nudix hydrolase domain in the interval 1 to 141; that stretch reads MRQRTIVCPL…RKTLRLKGLL (141 aa). A Nudix box motif is present at residues 38–59; sequence GGVEPGERIEEALRREIREELG.

The protein belongs to the Nudix hydrolase family. NudI subfamily. In terms of assembly, monomer. Mg(2+) serves as cofactor.

The enzyme catalyses a ribonucleoside 5'-triphosphate + H2O = a ribonucleoside 5'-phosphate + diphosphate + H(+). It catalyses the reaction a 2'-deoxyribonucleoside 5'-triphosphate + H2O = a 2'-deoxyribonucleoside 5'-phosphate + diphosphate + H(+). It carries out the reaction dUTP + H2O = dUMP + diphosphate + H(+). The catalysed reaction is dTTP + H2O = dTMP + diphosphate + H(+). The enzyme catalyses dCTP + H2O = dCMP + diphosphate + H(+). Functionally, catalyzes the hydrolysis of nucleoside triphosphates, with a preference for pyrimidine deoxynucleoside triphosphates (dUTP, dTTP and dCTP). The protein is Nucleoside triphosphatase NudI of Escherichia coli O17:K52:H18 (strain UMN026 / ExPEC).